A 463-amino-acid polypeptide reads, in one-letter code: V-type ATP synthase beta chain (463 aa).

The protein belongs to the ATPase alpha/beta chains family.

Produces ATP from ADP in the presence of a proton gradient across the membrane. The V-type beta chain is a regulatory subunit. The sequence is that of V-type ATP synthase beta chain from Halothermothrix orenii (strain H 168 / OCM 544 / DSM 9562).